The primary structure comprises 286 residues: D-tagatose-1,6-bisphosphate aldolase subunit KbaY (286 aa).

The active-site Proton donor is D82. Zn(2+) contacts are provided by H83 and H180. G181 provides a ligand contact to dihydroxyacetone phosphate. Residue H208 participates in Zn(2+) binding. Dihydroxyacetone phosphate-binding positions include 209–211 (GAS) and 230–233 (NVAT).

It belongs to the class II fructose-bisphosphate aldolase family. TagBP aldolase KbaY subfamily. As to quaternary structure, homotetramer. Forms a complex with KbaZ. Zn(2+) is required as a cofactor.

The catalysed reaction is D-tagatofuranose 1,6-bisphosphate = D-glyceraldehyde 3-phosphate + dihydroxyacetone phosphate. It functions in the pathway carbohydrate metabolism; D-tagatose 6-phosphate degradation; D-glyceraldehyde 3-phosphate and glycerone phosphate from D-tagatose 6-phosphate: step 2/2. Its function is as follows. Catalytic subunit of the tagatose-1,6-bisphosphate aldolase KbaYZ, which catalyzes the reversible aldol condensation of dihydroxyacetone phosphate (DHAP or glycerone-phosphate) with glyceraldehyde 3-phosphate (G3P) to produce tagatose 1,6-bisphosphate (TBP). Requires KbaZ subunit for full activity and stability. In Escherichia coli O127:H6 (strain E2348/69 / EPEC), this protein is D-tagatose-1,6-bisphosphate aldolase subunit KbaY.